The chain runs to 231 residues: MENGAARTVPAVIVAIDGPSGTGKSSTSKAVAAKLGLSYLDTGAQYRAITWWMVSNGIDITDPTAIAAVAGKPEIISGTDPSAPTITVDGTDVAAPIRTQEVTSKVSAVSAVPEVRTRITELQRSLATSAENGIVVEGRDIGTTVLPDADLKIFLTASPEARAARRSGELKGADVNSTREALLKRDAADSSRKTSPLAKADDAVEVDTSDLTLQQVIECVVTLVEEKRAAK.

Position 18–26 (18–26 (GPSGTGKSS)) interacts with ATP.

This sequence belongs to the cytidylate kinase family. Type 1 subfamily.

Its subcellular location is the cytoplasm. The enzyme catalyses CMP + ATP = CDP + ADP. It carries out the reaction dCMP + ATP = dCDP + ADP. The polypeptide is Cytidylate kinase (Streptomyces avermitilis (strain ATCC 31267 / DSM 46492 / JCM 5070 / NBRC 14893 / NCIMB 12804 / NRRL 8165 / MA-4680)).